We begin with the raw amino-acid sequence, 234 residues long: MAKTKAEHVHEVFESISDNYDKMNGVISFQMHIGWRNDTMKHMAVKPGSKALDVCCGTADWTIALAEAVGESGEVKGLDFSQNMLKVGEKKVQPYPQIELIHGNAMELPFPDDTFDYVTIGFGLRNVPDYLQVLKEMHRVVKPGGMVVCLETSQSEIPGYRQLFRFYFKYIMPIFGKIFAKSYKEYSWLQESANDFPGMKKLAALFEQAGLEKVTYKAYSGGAAAMHIGFKKIR.

Residues Thr-58, Asp-79, and 104-105 (NA) each bind S-adenosyl-L-methionine.

This sequence belongs to the class I-like SAM-binding methyltransferase superfamily. MenG/UbiE family.

The enzyme catalyses a 2-demethylmenaquinol + S-adenosyl-L-methionine = a menaquinol + S-adenosyl-L-homocysteine + H(+). The protein operates within quinol/quinone metabolism; menaquinone biosynthesis; menaquinol from 1,4-dihydroxy-2-naphthoate: step 2/2. Functionally, methyltransferase required for the conversion of demethylmenaquinol (DMKH2) to menaquinol (MKH2). The polypeptide is Demethylmenaquinone methyltransferase (Lysinibacillus sphaericus (strain C3-41)).